Reading from the N-terminus, the 542-residue chain is MTRYIFVTGGVVSSLGKGIASASLAAILEARGLKVTILKLDPYINVDPGTMSPFQHGEVFVTEDGAETDLDLGHYERFIRTTMTKRNNFTTGRVYETVLRKERRGDYLGGTVQVIPHITDEIKRRIVEGAGDADVALVEIGGTVGDIESLPFLEATRQLKVEVGSRRALFMHLTLVPYIATAGEVKTKPTQHSVKEMRSIGLQPDILVCRSEHSIDQSSRRKIALFTNVEERAVIALEDAKSIYSIPMMLHAQGLDEIIVERFGLECGPADLSEWQSVVDNEANPEHEVTIAMVGKYMELLDAYKSLIEALKHAGIRNKTKVNIRYIDSEQVYQQGVDLLKGVDAILVPGGFGERGVEGKIQTVRYARENKIPYLGICLGLQVAVIEYARHVAGMEDAHSTEFNPKSAHPVVGLITEWQDASGKTEQRDEASDLGGTMRLGAQECKLVDGSTVRECYGKAIIEERHRHRYEVNGNLVPRLEEAGLQVAGWSQDGSLVEVVEVKDHPWFVACQFHPEFKSTPRDGHPLFEGFVRAALENAGGK.

The segment at 1–265 is amidoligase domain; sequence MTRYIFVTGG…DEIIVERFGL (265 aa). Ser-13 lines the CTP pocket. Ser-13 is a UTP binding site. Residues 14–19 and Asp-71 each bind ATP; that span reads SLGKGI. Residues Asp-71 and Glu-139 each contribute to the Mg(2+) site. CTP is bound by residues 146 to 148, 186 to 191, and Lys-222; these read DIE and KTKPTQ. Residues 186 to 191 and Lys-222 each bind UTP; that span reads KTKPTQ. Positions 290–541 constitute a Glutamine amidotransferase type-1 domain; the sequence is TIAMVGKYME…VRAALENAGG (252 aa). Gly-351 is a binding site for L-glutamine. Cys-378 acts as the Nucleophile; for glutamine hydrolysis in catalysis. L-glutamine is bound by residues 379-382, Glu-402, and Arg-469; that span reads LGLQ. Residues His-514 and Glu-516 contribute to the active site.

Belongs to the CTP synthase family. As to quaternary structure, homotetramer.

The catalysed reaction is UTP + L-glutamine + ATP + H2O = CTP + L-glutamate + ADP + phosphate + 2 H(+). It carries out the reaction L-glutamine + H2O = L-glutamate + NH4(+). It catalyses the reaction UTP + NH4(+) + ATP = CTP + ADP + phosphate + 2 H(+). Its pathway is pyrimidine metabolism; CTP biosynthesis via de novo pathway; CTP from UDP: step 2/2. Allosterically activated by GTP, when glutamine is the substrate; GTP has no effect on the reaction when ammonia is the substrate. The allosteric effector GTP functions by stabilizing the protein conformation that binds the tetrahedral intermediate(s) formed during glutamine hydrolysis. Inhibited by the product CTP, via allosteric rather than competitive inhibition. Its function is as follows. Catalyzes the ATP-dependent amination of UTP to CTP with either L-glutamine or ammonia as the source of nitrogen. Regulates intracellular CTP levels through interactions with the four ribonucleotide triphosphates. The polypeptide is CTP synthase (Hahella chejuensis (strain KCTC 2396)).